We begin with the raw amino-acid sequence, 218 residues long: DNA replication complex GINS protein psf3 (218 aa).

A compositionally biased stretch (gly residues) spans 147–163 (GGGSSYHGRDGGGAGGK). Positions 147-182 (GGGSSYHGRDGGGAGGKGKGKATKDDNASNLGVGGA) are disordered.

It belongs to the GINS3/PSF3 family. Component of the GINS complex which is a heterotetramer of div-26/sld5, drc-1/psf1, drc-2/psf2 and drc-3/psf3.

The protein localises to the nucleus. The GINS complex plays an essential role in the initiation of DNA replication. This is DNA replication complex GINS protein psf3 (drc-3) from Neurospora crassa (strain ATCC 24698 / 74-OR23-1A / CBS 708.71 / DSM 1257 / FGSC 987).